The primary structure comprises 358 residues: Alanine racemase (358 aa).

Lysine 35 serves as the catalytic Proton acceptor; specific for D-alanine. Lysine 35 carries the post-translational modification N6-(pyridoxal phosphate)lysine. Residue arginine 130 coordinates substrate. Tyrosine 255 acts as the Proton acceptor; specific for L-alanine in catalysis. Methionine 303 contributes to the substrate binding site.

It belongs to the alanine racemase family. It depends on pyridoxal 5'-phosphate as a cofactor.

It carries out the reaction L-alanine = D-alanine. Its pathway is amino-acid biosynthesis; D-alanine biosynthesis; D-alanine from L-alanine: step 1/1. Catalyzes the interconversion of L-alanine and D-alanine. May also act on other amino acids. In Shewanella sp. (strain ANA-3), this protein is Alanine racemase (alr).